Consider the following 273-residue polypeptide: UPF0380 protein YubP (273 aa).

It belongs to the UPF0380 family.

The polypeptide is UPF0380 protein YubP (yubP) (Escherichia coli (strain K12)).